Reading from the N-terminus, the 777-residue chain is Serine/threonine-protein kinase PTK2 (777 aa).

The disordered stretch occupies residues Asn-21–Asn-174. The segment covering Thr-30–Lys-41 has biased composition (low complexity). 2 stretches are compositionally biased toward polar residues: residues Ala-50–Pro-61 and Arg-83–Met-133. The span at Ser-149–Ser-172 shows a compositional bias: low complexity. The Protein kinase domain maps to Asp-222–Phe-529. Residues Ile-228 to Val-236 and Lys-252 each bind ATP. The active-site Proton acceptor is Asp-355. Disordered regions lie at residues Asp-564 to Glu-705 and Ser-728 to Val-764. Polar residues-rich tracts occupy residues Thr-575–His-592 and Thr-648–Phe-672. Over residues Asn-677–Asp-694 the composition is skewed to low complexity. Positions Asn-744 to Thr-756 are enriched in polar residues.

The protein belongs to the protein kinase superfamily. Ser/Thr protein kinase family.

It carries out the reaction L-seryl-[protein] + ATP = O-phospho-L-seryl-[protein] + ADP + H(+). The catalysed reaction is L-threonyl-[protein] + ATP = O-phospho-L-threonyl-[protein] + ADP + H(+). This Candida glabrata (strain ATCC 2001 / BCRC 20586 / JCM 3761 / NBRC 0622 / NRRL Y-65 / CBS 138) (Yeast) protein is Serine/threonine-protein kinase PTK2 (PTK2).